Here is a 580-residue protein sequence, read N- to C-terminus: Putative monoterpene synthase 8 (580 aa).

A chloroplast-targeting transit peptide spans 1–44 (MACTSNLSSLSKSWAVLDVPRGAPKATGLWLKRQFIFKTSRICM). Mg(2+) is bound by residues aspartate 333, aspartate 337, aspartate 478, threonine 482, and glutamate 486. Residues 333–337 (DDIFD) carry the DDXXD motif motif.

This sequence belongs to the terpene synthase family. Tpsg subfamily. In terms of assembly, monomer. The cofactor is Mg(2+). It depends on Mn(2+) as a cofactor. As to expression, confined to flowers.

Its subcellular location is the plastid. It is found in the chloroplast. The protein operates within secondary metabolite biosynthesis; terpenoid biosynthesis. Functionally, monoterpene synthase (mono-TPS) involved in the biosynthesis of monoterpenes natural products, constituent of coffee beverage aroma. This Coffea arabica (Arabian coffee) protein is Putative monoterpene synthase 8.